A 210-amino-acid polypeptide reads, in one-letter code: Phosphate propanoyltransferase (210 aa).

Position 26–28 (26–28 (VSN)) interacts with CoA. Zn(2+)-binding residues include histidine 30 and histidine 32. Residues lysine 71 and arginine 78 each contribute to the CoA site. Arginine 84 contacts phosphate. Residues glutamate 90, histidine 138, histidine 140, and histidine 186 each contribute to the Zn(2+) site. Asparagine 193 is a CoA binding site.

Belongs to the PduL family. Monomer, when purified in the absence of the encapsulation peptide (EP, residues 1-27). The EP may influence oligomerization. Zn(2+) is required as a cofactor.

It is found in the bacterial microcompartment. It carries out the reaction propanoyl-CoA + phosphate = propanoyl phosphate + CoA. It participates in polyol metabolism; 1,2-propanediol degradation. In terms of biological role, involved in 1,2-propanediol (1,2-PD) utilization in the bacterial microcompartment (BMC) dedicated to 1,2-PD degradation by catalyzing the conversion of propanoyl-CoA to propanoyl-phosphate. Also able to catalyze the reverse reaction. Also has phosphate acetyltransferase activity to a lesser extent. Required for optimal growth on 1,2-PD when the BMC is intact. CoA is regenerated within the BMC (for use by PduP) via this enzyme, although there must also be cofactor transport across the BMC. Directly targeted to the BMC. The 1,2-PD-specific bacterial microcompartment (BMC) concentrates low levels of 1,2-PD catabolic enzymes, concentrates volatile reaction intermediates thus enhancing pathway flux and keeps the level of toxic, mutagenic propionaldehyde low. The protein is Phosphate propanoyltransferase of Salmonella typhimurium (strain LT2 / SGSC1412 / ATCC 700720).